The sequence spans 241 residues: Accessory protein p30II (241 aa).

2 short sequence motifs (nuclear localization signal) span residues 73–78 and 91–98; these read RRCRSR and GPRRSRPR. Composition is skewed to low complexity over residues 79–100 and 107–136; these read CVSP…PRLS and PSST…TSRS. The segment at 79–151 is disordered; the sequence is CVSPRGGAFS…GKHRNSPADT (73 aa). The Mitochondrial targeting signal motif lies at 175–184; the sequence is LRVWRLCTRR.

It belongs to the HTLV-1 accessory protein p30II family. P30II binds to the KIX domains of CREBBP and EP300.

The protein localises to the host nucleus. It is found in the host nucleolus. The protein resides in the host mitochondrion inner membrane. Functionally, p30II is a multifunctional regulator that sequesters EP300/CREBBP and down-regulates CREB-responsive element (CRE) and Tax-responsive element (TRE) mediated transcription. Specifically binds and represses tax/rex mRNA nuclear export. Since Tax and Rex are positive regulators of viral gene expression, their inhibition by p30II reduces virion production, and allows the virus to escape the host immune surveillance and persist latently in an immune-competent host. In terms of biological role, p13II increases mitochondrial permeability to monovalent cations, producing a rapid, membrane potential-dependent influx of potassium. This could involve a channel-forming activity. Interferes with cell proliferation and transformation and promotes apoptosis induced by ceramide and Fas ligand, probably using the Ras signaling. This Human T-cell leukemia virus 1 (strain Japan ATK-1 subtype A) (HTLV-1) protein is Accessory protein p30II.